A 62-amino-acid chain; its full sequence is MGKQCFVTGRKASTGNRRSHALNSTKRRWNANLQKVRILVDGKPKKVWVSARALKSGKVTRV.

Residues 1-22 (MGKQCFVTGRKASTGNRRSHAL) are disordered.

Belongs to the bacterial ribosomal protein bL28 family.

The sequence is that of Large ribosomal subunit protein bL28 from Staphylococcus aureus (strain N315).